The following is a 414-amino-acid chain: Hydroxysqualene dehydroxylase (414 aa).

It belongs to the HpnE family.

The catalysed reaction is squalene + FAD + H2O + H(+) = hydroxysqualene + FADH2. It functions in the pathway secondary metabolite biosynthesis; hopanoid biosynthesis. Involved in the biosynthesis of the hopanoid precursor squalene (SQ) from farnesyl diphosphate (FPP). Catalyzes the third (last) step, the reduction of hydroxysqualene (HSQ) to SQ. This chain is Hydroxysqualene dehydroxylase, found in Zymomonas mobilis subsp. mobilis (strain ATCC 31821 / ZM4 / CP4).